Consider the following 348-residue polypeptide: 4-hydroxyphenylpyruvate dioxygenase (348 aa).

VOC domains lie at 11–141 and 151–303; these read GFAF…ITSP and AIDH…IFTE. Fe cation is bound by residues His154, His232, and Glu312.

This sequence belongs to the 4HPPD family. The cofactor is Fe cation.

It catalyses the reaction 3-(4-hydroxyphenyl)pyruvate + O2 = homogentisate + CO2. In terms of biological role, catalyzes the transformation of p-hydroxyphenylpyruvate into HGA. Has hemolytic and brown pigment production activity. The polypeptide is 4-hydroxyphenylpyruvate dioxygenase (lly) (Legionella pneumophila subsp. pneumophila (strain Philadelphia 1 / ATCC 33152 / DSM 7513)).